A 92-amino-acid polypeptide reads, in one-letter code: Protein OP-ORF (92 aa).

The stretch at 53–82 (KMLAATISILEEEVTELVTELNNTTNLTAK) forms a coiled coil.

The protein is Protein OP-ORF of Rice dwarf virus (isolate Fujian) (RDV).